The primary structure comprises 172 residues: uncharacterized protein (172 aa).

A signal peptide spans 1–29 (MKKKQVMLALTAAAGLGLTALHSAPAAKA). SH3b domains lie at 42 to 105 (SDTY…MKTA) and 112 to 172 (KQTA…LQMR).

This is an uncharacterized protein from Bacillus subtilis (strain 168).